The sequence spans 294 residues: Phosphatidylserine decarboxylase proenzyme (294 aa).

Residues Asp-92, His-149, and Ser-252 each act as charge relay system; for autoendoproteolytic cleavage activity in the active site. Residue Ser-252 is the Schiff-base intermediate with substrate; via pyruvic acid; for decarboxylase activity of the active site. Ser-252 is subject to Pyruvic acid (Ser); by autocatalysis.

Belongs to the phosphatidylserine decarboxylase family. PSD-B subfamily. Prokaryotic type I sub-subfamily. Heterodimer of a large membrane-associated beta subunit and a small pyruvoyl-containing alpha subunit. The cofactor is pyruvate. In terms of processing, is synthesized initially as an inactive proenzyme. Formation of the active enzyme involves a self-maturation process in which the active site pyruvoyl group is generated from an internal serine residue via an autocatalytic post-translational modification. Two non-identical subunits are generated from the proenzyme in this reaction, and the pyruvate is formed at the N-terminus of the alpha chain, which is derived from the carboxyl end of the proenzyme. The autoendoproteolytic cleavage occurs by a canonical serine protease mechanism, in which the side chain hydroxyl group of the serine supplies its oxygen atom to form the C-terminus of the beta chain, while the remainder of the serine residue undergoes an oxidative deamination to produce ammonia and the pyruvoyl prosthetic group on the alpha chain. During this reaction, the Ser that is part of the protease active site of the proenzyme becomes the pyruvoyl prosthetic group, which constitutes an essential element of the active site of the mature decarboxylase.

It is found in the cell membrane. The enzyme catalyses a 1,2-diacyl-sn-glycero-3-phospho-L-serine + H(+) = a 1,2-diacyl-sn-glycero-3-phosphoethanolamine + CO2. It functions in the pathway phospholipid metabolism; phosphatidylethanolamine biosynthesis; phosphatidylethanolamine from CDP-diacylglycerol: step 2/2. Catalyzes the formation of phosphatidylethanolamine (PtdEtn) from phosphatidylserine (PtdSer). This Bordetella avium (strain 197N) protein is Phosphatidylserine decarboxylase proenzyme.